A 580-amino-acid chain; its full sequence is NADH-quinone oxidoreductase subunit C/D (580 aa).

Positions 1–171 are NADH dehydrogenase I subunit C; the sequence is MSFDQVIADA…PPFVLTDRLF (171 aa). Residues 195 to 580 form an NADH dehydrogenase I subunit D region; that stretch reads ELMVLNFGPH…IDFVMSDVDR (386 aa).

The protein in the N-terminal section; belongs to the complex I 30 kDa subunit family. It in the C-terminal section; belongs to the complex I 49 kDa subunit family. In terms of assembly, NDH-1 is composed of 13 different subunits. Subunits NuoB, CD, E, F, and G constitute the peripheral sector of the complex.

The protein resides in the cell inner membrane. It carries out the reaction a quinone + NADH + 5 H(+)(in) = a quinol + NAD(+) + 4 H(+)(out). Functionally, NDH-1 shuttles electrons from NADH, via FMN and iron-sulfur (Fe-S) centers, to quinones in the respiratory chain. The immediate electron acceptor for the enzyme in this species is believed to be ubiquinone. Couples the redox reaction to proton translocation (for every two electrons transferred, four hydrogen ions are translocated across the cytoplasmic membrane), and thus conserves the redox energy in a proton gradient. This Cereibacter sphaeroides (strain ATCC 17025 / ATH 2.4.3) (Rhodobacter sphaeroides) protein is NADH-quinone oxidoreductase subunit C/D.